The primary structure comprises 754 residues: Probable galactinol--sucrose galactosyltransferase 1 (754 aa).

This sequence belongs to the glycosyl hydrolases 36 family.

The enzyme catalyses alpha-D-galactosyl-(1-&gt;3)-1D-myo-inositol + sucrose = raffinose + myo-inositol. Its function is as follows. Transglycosidase operating by a ping-pong reaction mechanism. Involved in the synthesis of raffinose, a major soluble carbohydrate in seeds, roots and tubers. This chain is Probable galactinol--sucrose galactosyltransferase 1 (RFS1), found in Arabidopsis thaliana (Mouse-ear cress).